The chain runs to 123 residues: Small ribosomal subunit protein uS13c (123 aa).

Positions 89–123 (RGKRHRNNLPVRGQRTRTNARSRRGSKKTVTGKKK) are disordered. Residues 102–123 (QRTRTNARSRRGSKKTVTGKKK) are compositionally biased toward basic residues.

This sequence belongs to the universal ribosomal protein uS13 family. In terms of assembly, part of the 30S ribosomal subunit.

The protein localises to the plastid. Its subcellular location is the chloroplast. Located at the top of the head of the 30S subunit, it contacts several helices of the 16S rRNA. The protein is Small ribosomal subunit protein uS13c of Phaeodactylum tricornutum (strain CCAP 1055/1).